The chain runs to 445 residues: Glutamate-1-semialdehyde 2,1-aminomutase (445 aa).

Lys-263 is subject to N6-(pyridoxal phosphate)lysine.

This sequence belongs to the class-III pyridoxal-phosphate-dependent aminotransferase family. HemL subfamily. Pyridoxal 5'-phosphate serves as cofactor.

The protein localises to the cytoplasm. It catalyses the reaction (S)-4-amino-5-oxopentanoate = 5-aminolevulinate. It participates in porphyrin-containing compound metabolism; protoporphyrin-IX biosynthesis; 5-aminolevulinate from L-glutamyl-tRNA(Glu): step 2/2. The polypeptide is Glutamate-1-semialdehyde 2,1-aminomutase (Halorubrum lacusprofundi (strain ATCC 49239 / DSM 5036 / JCM 8891 / ACAM 34)).